A 133-amino-acid polypeptide reads, in one-letter code: UPF0225 protein BPP1723 (133 aa).

The protein belongs to the UPF0225 family.

The polypeptide is UPF0225 protein BPP1723 (Bordetella parapertussis (strain 12822 / ATCC BAA-587 / NCTC 13253)).